We begin with the raw amino-acid sequence, 982 residues long: E3 ubiquitin-protein ligase CBL-B (982 aa).

Over residues 1–14 (MASSSSSSSSTNSS) the composition is skewed to low complexity. The disordered stretch occupies residues 1 to 25 (MASSSSSSSSTNSSAVTGRLPGARS). A 4H region spans residues 46 to 178 (PPKQAAADRR…KAIFPSGQFQ (133 aa)). Residues 46–354 (PPKQAAADRR…GRSYNPDLTD (309 aa)) enclose the Cbl-PTB domain. The EF-hand-like stretch occupies residues 179-251 (GDNFRITKAD…FEFDIFTRLF (73 aa)). The Ca(2+) site is built by aspartate 232, threonine 234, asparagine 236, tyrosine 238, and glutamate 243. The interval 252-354 (QPWTSILRNW…GRSYNPDLTD (103 aa)) is SH2-like. Arginine 297 lines the 4-O-phospho-L-tyrosine pocket. The tract at residues 355–383 (LCEPTPHDHIKVTQEQYELYCEMGSTFQL) is linker. The RING-type zinc-finger motif lies at 384 to 423 (CKICAENDKDVKIEPCGHLMCTSCLTSWQESDGQGCPFCR). 3 disordered regions span residues 480 to 582 (MNER…RTCR), 709 to 728 (VRNSAEEDDSEYKIPSSHPV), and 766 to 911 (LKQP…PVPR). Positions 483–497 (RQNSPVTSPGSSPLS) are enriched in polar residues. Pro residues predominate over residues 554-576 (LPAPPPPLREPPPPPERPPPIPP). Over residues 825–834 (PSQPPPPPPA) the composition is skewed to pro residues. A UBA domain is found at 927 to 970 (SLAENVDAKIAKLMGEGFPFEEVKRALEIAQNNVDVARSILREF).

Interacts with several SH3 domain-containing proteins and with poly-ubiquitinated proteins.

The protein resides in the cytoplasm. It catalyses the reaction S-ubiquitinyl-[E2 ubiquitin-conjugating enzyme]-L-cysteine + [acceptor protein]-L-lysine = [E2 ubiquitin-conjugating enzyme]-L-cysteine + N(6)-ubiquitinyl-[acceptor protein]-L-lysine.. The protein operates within protein modification; protein ubiquitination. In terms of biological role, E3 ubiquitin-protein ligase which accepts ubiquitin from specific E2 ubiquitin-conjugating enzymes, and transfers it to substrates, generally promoting their degradation by the proteasome. This is E3 ubiquitin-protein ligase CBL-B (cblb) from Xenopus tropicalis (Western clawed frog).